A 156-amino-acid polypeptide reads, in one-letter code: Small ribosomal subunit protein uS7cz/uS7cy (156 aa).

The protein belongs to the universal ribosomal protein uS7 family. As to quaternary structure, part of the 30S ribosomal subunit.

It localises to the plastid. The protein localises to the chloroplast. Functionally, one of the primary rRNA binding proteins, it binds directly to 16S rRNA where it nucleates assembly of the head domain of the 30S subunit. The sequence is that of Small ribosomal subunit protein uS7cz/uS7cy (rps7-A) from Triticum aestivum (Wheat).